The primary structure comprises 249 residues: Adenosylcobinamide-GDP ribazoletransferase (249 aa).

6 helical membrane passes run methionine 32–glycine 52, alanine 53–isoleucine 73, isoleucine 107–leucine 127, alanine 136–proline 156, leucine 190–alanine 210, and threonine 224–valine 244.

This sequence belongs to the CobS family. Requires Mg(2+) as cofactor.

Its subcellular location is the cell membrane. It catalyses the reaction alpha-ribazole + adenosylcob(III)inamide-GDP = adenosylcob(III)alamin + GMP + H(+). The enzyme catalyses alpha-ribazole 5'-phosphate + adenosylcob(III)inamide-GDP = adenosylcob(III)alamin 5'-phosphate + GMP + H(+). Its pathway is cofactor biosynthesis; adenosylcobalamin biosynthesis; adenosylcobalamin from cob(II)yrinate a,c-diamide: step 7/7. Joins adenosylcobinamide-GDP and alpha-ribazole to generate adenosylcobalamin (Ado-cobalamin). Also synthesizes adenosylcobalamin 5'-phosphate from adenosylcobinamide-GDP and alpha-ribazole 5'-phosphate. The polypeptide is Adenosylcobinamide-GDP ribazoletransferase (Herpetosiphon aurantiacus (strain ATCC 23779 / DSM 785 / 114-95)).